Here is a 141-residue protein sequence, read N- to C-terminus: Short-chain diamines transporter (141 aa).

Helical transmembrane passes span 16–36 (VILL…PLEV), 39–59 (TLGI…NHFF), 76–96 (ILHA…MVAY), and 103–123 (WQAI…TFIF).

Belongs to the proteobacterial antimicrobial compound efflux (PACE) (TC 2.A.117) family.

It localises to the cell inner membrane. Its function is as follows. Mediates the efflux of short-chain diamines when energized by an electrochemical gradient. Involved in resistance to the synthetic biocide chlorhexidine, a widely used antiseptic and disinfectant in both hospital and community settings. Interacts directly with chlorhexidine and mediates its efflux via an energy-dependent mechanism. This chain is Short-chain diamines transporter, found in Acinetobacter baylyi (strain ATCC 33305 / BD413 / ADP1).